A 222-amino-acid polypeptide reads, in one-letter code: Probable mitochondrial import inner membrane translocase subunit Tim17 3 (222 aa).

3 consecutive transmembrane segments (helical) span residues 16–36 (CGCAFMMGTIGGSLFEFLKGF), 60–80 (SIAGSFAVWGATFSTVDCALV), and 115–135 (ALVGCLVLAMIEGAGAAVATI).

Belongs to the Tim17/Tim22/Tim23 family. As to quaternary structure, component of the TIM23 complex at least composed of Tim23, Tim17 (Tim17a1, Tim17a2 or Tim17b1) and a Tim50. The complex interacts with the Tim44 component of the PAM complex.

Its subcellular location is the mitochondrion inner membrane. Functionally, essential component of the TIM23 complex, a complex that mediates the translocation of transit peptide-containing proteins across the mitochondrial inner membrane. The chain is Probable mitochondrial import inner membrane translocase subunit Tim17 3 (Tim17a1) from Drosophila melanogaster (Fruit fly).